We begin with the raw amino-acid sequence, 722 residues long: Polyribonucleotide nucleotidyltransferase (722 aa).

Aspartate 487 and aspartate 493 together coordinate Mg(2+). Residues 554 to 613 form the KH domain; that stretch reads PRMVSFKIHPDKIREVIGKGGATIQALTKETGCSIDIKDDGTVTIASTSAEGMAEAKARI. An S1 motif domain is found at 623–691; sequence GKIYEGPVVK…ERGRLRLSLK (69 aa).

This sequence belongs to the polyribonucleotide nucleotidyltransferase family. Mg(2+) is required as a cofactor.

It localises to the cytoplasm. It catalyses the reaction RNA(n+1) + phosphate = RNA(n) + a ribonucleoside 5'-diphosphate. Involved in mRNA degradation. Catalyzes the phosphorolysis of single-stranded polyribonucleotides processively in the 3'- to 5'-direction. This chain is Polyribonucleotide nucleotidyltransferase, found in Polynucleobacter necessarius subsp. necessarius (strain STIR1).